The primary structure comprises 510 residues: NAD(P)H-quinone oxidoreductase subunit 2 B, chloroplastic (510 aa).

The next 13 helical transmembrane spans lie at L24–L44, I57–F77, I99–I119, M124–C144, L149–Y169, Y183–G203, P227–A247, W295–I315, M323–N343, Y354–L374, A395–F415, L418–L438, and M484–I504.

This sequence belongs to the complex I subunit 2 family. NDH is composed of at least 16 different subunits, 5 of which are encoded in the nucleus.

The protein resides in the plastid. It is found in the chloroplast thylakoid membrane. It catalyses the reaction a plastoquinone + NADH + (n+1) H(+)(in) = a plastoquinol + NAD(+) + n H(+)(out). The enzyme catalyses a plastoquinone + NADPH + (n+1) H(+)(in) = a plastoquinol + NADP(+) + n H(+)(out). Functionally, NDH shuttles electrons from NAD(P)H:plastoquinone, via FMN and iron-sulfur (Fe-S) centers, to quinones in the photosynthetic chain and possibly in a chloroplast respiratory chain. The immediate electron acceptor for the enzyme in this species is believed to be plastoquinone. Couples the redox reaction to proton translocation, and thus conserves the redox energy in a proton gradient. This chain is NAD(P)H-quinone oxidoreductase subunit 2 B, chloroplastic, found in Gossypium barbadense (Sea Island cotton).